A 353-amino-acid polypeptide reads, in one-letter code: Photosystem II D2 protein (353 aa).

Thr2 is modified (N-acetylthreonine). Thr2 carries the phosphothreonine modification. The chain crosses the membrane as a helical span at residues Cys41–Thr61. His118 serves as a coordination point for chlorophyll a. The helical transmembrane segment at Gly125–Pro141 threads the bilayer. Residues Gln130 and Asn143 each contribute to the pheophytin a site. The chain crosses the membrane as a helical span at residues Val153 to Ser166. A chlorophyll a-binding site is contributed by His198. The helical transmembrane segment at Ala208–Asp228 threads the bilayer. Residues His215 and Phe262 each contribute to the a plastoquinone site. Fe cation is bound at residue His215. His269 contributes to the Fe cation binding site. Residues Gly279–Arg295 form a helical membrane-spanning segment.

Belongs to the reaction center PufL/M/PsbA/D family. In terms of assembly, PSII is composed of 1 copy each of membrane proteins PsbA, PsbB, PsbC, PsbD, PsbE, PsbF, PsbH, PsbI, PsbJ, PsbK, PsbL, PsbM, PsbT, PsbX, PsbY, PsbZ, Psb30/Ycf12, at least 3 peripheral proteins of the oxygen-evolving complex and a large number of cofactors. It forms dimeric complexes. Requires The D1/D2 heterodimer binds P680, chlorophylls that are the primary electron donor of PSII, and subsequent electron acceptors. It shares a non-heme iron and each subunit binds pheophytin, quinone, additional chlorophylls, carotenoids and lipids. There is also a Cl(-1) ion associated with D1 and D2, which is required for oxygen evolution. The PSII complex binds additional chlorophylls, carotenoids and specific lipids. as cofactor.

The protein localises to the plastid. The protein resides in the chloroplast thylakoid membrane. The enzyme catalyses 2 a plastoquinone + 4 hnu + 2 H2O = 2 a plastoquinol + O2. Functionally, photosystem II (PSII) is a light-driven water:plastoquinone oxidoreductase that uses light energy to abstract electrons from H(2)O, generating O(2) and a proton gradient subsequently used for ATP formation. It consists of a core antenna complex that captures photons, and an electron transfer chain that converts photonic excitation into a charge separation. The D1/D2 (PsbA/PsbD) reaction center heterodimer binds P680, the primary electron donor of PSII as well as several subsequent electron acceptors. D2 is needed for assembly of a stable PSII complex. This Nuphar advena (Common spatterdock) protein is Photosystem II D2 protein.